We begin with the raw amino-acid sequence, 83 residues long: Alpha-neurotoxin NTX-4 (83 aa).

The first 21 residues, 1–21 (MKTLLLTLLVVTIVCLDLGYT), serve as a signal peptide directing secretion. 4 disulfide bridges follow: cysteine 24-cysteine 45, cysteine 38-cysteine 62, cysteine 64-cysteine 75, and cysteine 76-cysteine 81.

It belongs to the three-finger toxin family. Short-chain subfamily. Type I alpha-neurotoxin sub-subfamily. In terms of tissue distribution, expressed by the venom gland.

It localises to the secreted. Its function is as follows. Binds to muscle nicotinic acetylcholine receptor (nAChR) and inhibit acetylcholine from binding to the receptor, thereby impairing neuromuscular transmission. The chain is Alpha-neurotoxin NTX-4 from Naja sputatrix (Malayan spitting cobra).